The primary structure comprises 122 residues: MIQQESRLKVADNSGAKEVLVIKNLGGSWRKFTNIGDIVVCTIKKVTPGGIVKKGQVVKAIIVRTKRGLKRSDGTQIQFSENAVVLIKDDKNPRGTRIFGPIAREVKDAGFVKIASLAPEVL.

It belongs to the universal ribosomal protein uL14 family. Part of the 50S ribosomal subunit. Forms a cluster with proteins L3 and L19. In the 70S ribosome, L14 and L19 interact and together make contacts with the 16S rRNA in bridges B5 and B8.

Functionally, binds to 23S rRNA. Forms part of two intersubunit bridges in the 70S ribosome. In Spiroplasma citri, this protein is Large ribosomal subunit protein uL14.